Here is a 47-residue protein sequence, read N- to C-terminus: Gas vesicle protein A (47 aa).

It belongs to the gas vesicle GvpA family. In terms of assembly, the gas vesicle shell is 2 nm thick and consists of a single layer of this protein. It forms helical ribs nearly perpendicular to the long axis of the vesicle.

It is found in the gas vesicle shell. Functionally, gas vesicles are hollow, gas filled proteinaceous nanostructures found in some microorganisms. During planktonic growth they allow positioning of the organism at a favorable depth for light or nutrient acquisition. GvpA forms the protein shell. This is Gas vesicle protein A from Dactylococcopsis salina (Myxobaktron salinum).